A 274-amino-acid polypeptide reads, in one-letter code: Large ribosomal subunit protein uL2cz/uL2cy (274 aa).

Disordered stretches follow at residues 1 to 21 (MAIH…VDSQ) and 225 to 254 (PVDH…PALG).

This sequence belongs to the universal ribosomal protein uL2 family. Part of the 50S ribosomal subunit.

Its subcellular location is the plastid. The protein localises to the chloroplast. This Draba nemorosa (Woodland whitlowgrass) protein is Large ribosomal subunit protein uL2cz/uL2cy (rpl2-A).